The chain runs to 489 residues: Cytochrome P450 monooxygenase trt6 (489 aa).

The chain crosses the membrane as a helical span at residues 10-30; that stretch reads SLWSFGLWILVILSPVLFFAS. N-linked (GlcNAc...) asparagine glycosylation is found at Asn-364 and Asn-407. Cys-430 provides a ligand contact to heme.

This sequence belongs to the cytochrome P450 family. Heme serves as cofactor.

The protein resides in the membrane. Its pathway is secondary metabolite biosynthesis; terpenoid biosynthesis. Cytochrome P450 monooxygenase; part of the gene cluster that mediates the biosynthesis of terretonin, a fungal meroterpenoid that acts as a mycotoxin. The first step of the pathway is the synthesis of 3,5-dimethylorsellinic acid (DMOA) by the polyketide synthase trt4. DMOA is then prenylated into farnesyl-DMOA by the polyprenyl transferase trt2. Methylation by the methyltransferase trt5 then leads to farnesyl-DMOA methyl ester which is further subject to epoxidation by the FAD-dependent monooxygenase trt8 to yield epoxyfarnesyl-DMOA methyl ester. Cyclization of epoxyfarnesyl-DMOA methyl ester by the terpene cyclase trt1 leads to a tetracycle intermediate which is in turn converted to preterretonin. Dehydrogenase trt9 comes next to transform preterretonin to preterrenoid. The FAD-dependent monooxygenase trt3 is then required for the C-hydroxylation at C16 of preterrenoid to yield terrenoid. The cytochrome P450 trt6 catalyzes three successive oxidations to transform terrenoid into an unstable intermediate, which then undergoes the D-ring expansion and unusual rearrangement of the methoxy group to afford the core skeleton of terretonin. Trt14 catalyzes the D-ring expansion of terretonin involving intramolecular methoxy rearrangement as well as the hydrolysis of the expanded D-ring and the methyl ester moiety. Finally, the nonheme iron-dependent dioxygenase trt7 accomplishes the last two oxidation reactions steps to complete the biosynthesis of terretonin. Terretonin C is produced via spontaneous decarboxylation of the terretonin precursor. Another shunt product of the terretonin biosynthesis is dihydrofarnesyl-DMOA, derived from epoxyfarnesyl-DMOA through hydrolysis of the epoxide. In Aspergillus terreus (strain NIH 2624 / FGSC A1156), this protein is Cytochrome P450 monooxygenase trt6.